Consider the following 206-residue polypeptide: MARYLGPKLKLSRREGTDLFLKSGVRAIDTKCKIEQAPGQHGARKPRLSDYGVQLREKQKVRRIYGVLERQFRNYYKEAARLKGNTGENLLALLEGRLDNVVYRMGFGATRAEARQLVSHKAIMVNGRVVNIASYQVSPNDVVSIREKAKKQSRVKAALELAEQREKPTWLEVDAGKMEGTYKRKPERSDLSADINEHLIVELYSK.

The region spanning 96-156 (GRLDNVVYRM…EKAKKQSRVK (61 aa)) is the S4 RNA-binding domain.

This sequence belongs to the universal ribosomal protein uS4 family. In terms of assembly, part of the 30S ribosomal subunit. Contacts protein S5. The interaction surface between S4 and S5 is involved in control of translational fidelity.

In terms of biological role, one of the primary rRNA binding proteins, it binds directly to 16S rRNA where it nucleates assembly of the body of the 30S subunit. Functionally, with S5 and S12 plays an important role in translational accuracy. This is Small ribosomal subunit protein uS4 from Salmonella agona (strain SL483).